Reading from the N-terminus, the 349-residue chain is Aspartate-semialdehyde dehydrogenase (349 aa).

NADP(+) contacts are provided by residues 12–15 and 39–40; these read TGSV and NS. Residue arginine 113 coordinates phosphate. The active-site Acyl-thioester intermediate is cysteine 148. Glutamine 175 provides a ligand contact to substrate. 178 to 179 is an NADP(+) binding site; that stretch reads SG. Glutamate 201 is a substrate binding site. Lysine 204 is a binding site for phosphate. Position 234 (arginine 234) interacts with substrate. Histidine 241 (proton acceptor) is an active-site residue. 326–327 contributes to the NADP(+) binding site; that stretch reads NT.

Belongs to the aspartate-semialdehyde dehydrogenase family. As to quaternary structure, homodimer.

The enzyme catalyses L-aspartate 4-semialdehyde + phosphate + NADP(+) = 4-phospho-L-aspartate + NADPH + H(+). It functions in the pathway amino-acid biosynthesis; L-lysine biosynthesis via DAP pathway; (S)-tetrahydrodipicolinate from L-aspartate: step 2/4. It participates in amino-acid biosynthesis; L-methionine biosynthesis via de novo pathway; L-homoserine from L-aspartate: step 2/3. Its pathway is amino-acid biosynthesis; L-threonine biosynthesis; L-threonine from L-aspartate: step 2/5. Catalyzes the NADPH-dependent formation of L-aspartate-semialdehyde (L-ASA) by the reductive dephosphorylation of L-aspartyl-4-phosphate. This chain is Aspartate-semialdehyde dehydrogenase, found in Leptospira interrogans serogroup Icterohaemorrhagiae serovar Lai (strain 56601).